The primary structure comprises 24 residues: Frenatin-4 (24 aa).

In terms of tissue distribution, expressed by the skin glands.

The protein localises to the secreted. Very weak antimicrobial peptide since it does not show activity below 100 ug/ml against Bacillus cereus, Escherichia coli, Leuconostoc mesenteroides, Micrococcus luteus, Pastewella haemolytica, Staphylococcus aureus, Streptococcus faecalis and Streptococcus uberis. The protein is Frenatin-4 of Nyctimystes infrafrenatus (White-lipped tree frog).